Consider the following 237-residue polypeptide: Large ribosomal subunit protein uL1 (237 aa).

Belongs to the universal ribosomal protein uL1 family. In terms of assembly, part of the 50S ribosomal subunit.

In terms of biological role, binds directly to 23S rRNA. The L1 stalk is quite mobile in the ribosome, and is involved in E site tRNA release. Its function is as follows. Protein L1 is also a translational repressor protein, it controls the translation of the L11 operon by binding to its mRNA. The chain is Large ribosomal subunit protein uL1 from Dehalococcoides mccartyi (strain ATCC BAA-2100 / JCM 16839 / KCTC 5957 / BAV1).